The primary structure comprises 73 residues: Translational regulator CsrA (73 aa).

This sequence belongs to the CsrA/RsmA family. As to quaternary structure, homodimer; the beta-strands of each monomer intercalate to form a hydrophobic core, while the alpha-helices form wings that extend away from the core.

The protein resides in the cytoplasm. Functionally, a translational regulator that binds mRNA to regulate translation initiation and/or mRNA stability. Usually binds in the 5'-UTR at or near the Shine-Dalgarno sequence preventing ribosome-binding, thus repressing translation. Its main target seems to be the major flagellin gene, while its function is anatagonized by FliW. In Thermosipho africanus (strain TCF52B), this protein is Translational regulator CsrA.